Here is a 233-residue protein sequence, read N- to C-terminus: ATP synthase subunit a (233 aa).

The next 7 helical transmembrane spans lie at 29–49 (FKHV…SFIV), 60–80 (LQNI…SITG), 89–109 (VLIV…VPGF), 115–135 (NINT…YIGI), 143–163 (IKHF…LELI), 185–205 (FVLI…IYFL), and 206–226 (FTLA…IYLK).

It belongs to the ATPase A chain family. In terms of assembly, F-type ATPases have 2 components, CF(1) - the catalytic core - and CF(0) - the membrane proton channel. CF(1) has five subunits: alpha(3), beta(3), gamma(1), delta(1), epsilon(1). CF(0) has three main subunits: a(1), b(2) and c(9-12). The alpha and beta chains form an alternating ring which encloses part of the gamma chain. CF(1) is attached to CF(0) by a central stalk formed by the gamma and epsilon chains, while a peripheral stalk is formed by the delta and b chains.

Its subcellular location is the cell inner membrane. Functionally, key component of the proton channel; it plays a direct role in the translocation of protons across the membrane. The polypeptide is ATP synthase subunit a (Oleidesulfovibrio alaskensis (strain ATCC BAA-1058 / DSM 17464 / G20) (Desulfovibrio alaskensis)).